The primary structure comprises 444 residues: Glutamate--tRNA ligase 1 (444 aa).

The 'HIGH' region signature appears at proline 7–asparagine 17. The 'KMSKS' region motif lies at lysine 238–arginine 242. An ATP-binding site is contributed by lysine 241.

It belongs to the class-I aminoacyl-tRNA synthetase family. Glutamate--tRNA ligase type 1 subfamily. In terms of assembly, monomer.

It localises to the cytoplasm. The catalysed reaction is tRNA(Glu) + L-glutamate + ATP = L-glutamyl-tRNA(Glu) + AMP + diphosphate. In terms of biological role, catalyzes the attachment of glutamate to tRNA(Glu) in a two-step reaction: glutamate is first activated by ATP to form Glu-AMP and then transferred to the acceptor end of tRNA(Glu). The sequence is that of Glutamate--tRNA ligase 1 from Wolbachia pipientis subsp. Culex pipiens (strain wPip).